We begin with the raw amino-acid sequence, 164 residues long: Transcriptional repressor NrdR (164 aa).

A zinc finger lies at 3–34 (CPKCNYHKSSVVDSRQAEDGNTIRRRRECEQC). Residues 49 to 139 (LLVIKKDGTR…VYKSFKDVDE (91 aa)) form the ATP-cone domain.

This sequence belongs to the NrdR family. Zn(2+) serves as cofactor.

In terms of biological role, negatively regulates transcription of bacterial ribonucleotide reductase nrd genes and operons by binding to NrdR-boxes. The protein is Transcriptional repressor NrdR of Streptococcus pyogenes serotype M5 (strain Manfredo).